We begin with the raw amino-acid sequence, 317 residues long: Methyltransferase CPUR_05424 (317 aa).

A methyltransferase domain region spans residues 57–149 (DVGAGNGPYA…QLRPGGTFAC (93 aa)).

Belongs to the methyltransferase superfamily.

It participates in pigment biosynthesis. Functionally, methyltransferase; part of the ergochrome gene cluster responsible for the typical purple-black color of the ergot sclerotia. The ergochrome gene cluster produces several ergot pigments including the yellow ergochrome secalonic acid and its derivatives, as well as the red anthraquinones endocrocin and clavorubin. The pathway begins with the synthesis of atrochrysone thioester by the polyketide synthase (PKS) CPUR_05437. The atrochrysone carboxyl ACP thioesterase CPUR_05436 then breaks the thioester bond and releases the atrochrysone carboxylic acid from CPUR_05437. The atrochrysone carboxylic acid is then converted to atrochrysone which is further transformed into emodin anthrone. The next step is performed by the anthrone oxygenase CPUR_05434 that catalyzes the oxidation of emodinanthrone to emodin. Emodin is further modified to yield monodictyphenone via several steps involving CPUR_05427, CPUR_05428, CPUR_05429 and CPUR_05430. The short chain dehydrogenase/reductase CPUR_05418 then catalyzes the C-5 ketoreduction to give the xanthone skeleton of the monomeric units. Ergochromes formation requires further dimerization steps of different xanthone units, probably catalyzed by the cytochrome P450 monooxygenase CPUR_05419. CPUR_05425, CPUR_05426 and CPUR_05431 are unique to Claviceps, thus it is likely that they are involved in further modification of xanthone units or in their dimerization. The yellow ergochromes and the red anthraquinone pigments endocrocin and clavorubin are products from the same PKS derived precursors and the latter are likely shunt products in the pathway of xanthone biosynthesis. It is proposed that atrochrysone carboxylic acid released from the PKS CPUR_05437 can also be converted to endocrocin anthrone which is further oxidized into endocrocin by CPUR_05435. Endocrocin could be then modified to clavorubin, possibly by CPUR_05423 and CPUR_05431. Clavorubin is the principal anthraquinone metabolite produced by the cluster with a much higher yield compared to endocrocin. This is Methyltransferase CPUR_05424 from Claviceps purpurea (strain 20.1) (Ergot fungus).